Here is a 256-residue protein sequence, read N- to C-terminus: V-type proton ATPase subunit D (256 aa).

The segment covering 211–230 (QNETAKLDAEMKLKRDRAEQ) has biased composition (basic and acidic residues). Residues 211-256 (QNETAKLDAEMKLKRDRAEQDASEVAADEEPQGETLVADQEDDVIF) form a disordered region.

The protein belongs to the V-ATPase D subunit family. V-ATPase is a heteromultimeric enzyme composed of a peripheral catalytic V1 complex (components A to H) attached to an integral membrane V0 proton pore complex (components: a, c, c', c'', d, e, f and VOA1). Interacts with RAV1 and RAV2 components of the RAVE complex, which are essential for the stability and assembly of V-ATPase.

It localises to the vacuole membrane. Functionally, subunit of the V1 complex of vacuolar(H+)-ATPase (V-ATPase), a multisubunit enzyme composed of a peripheral complex (V1) that hydrolyzes ATP and a membrane integral complex (V0) that translocates protons. V-ATPase is responsible for acidifying and maintaining the pH of intracellular compartments. The sequence is that of V-type proton ATPase subunit D from Saccharomyces cerevisiae (strain ATCC 204508 / S288c) (Baker's yeast).